Consider the following 407-residue polypeptide: Protein ZNF365 (407 aa).

Serine 16 carries the phosphoserine modification. The segment at 26–51 adopts a C2H2-type; degenerate zinc-finger fold; it reads LRCPRCGDHTRFRSLSSLRAHLEFSH. Serine 138 carries the post-translational modification Phosphoserine. The stretch at 169–297 forms a coiled coil; that stretch reads VEAVDRTIEK…QLEYYQSQQA (129 aa). Threonine 175 is subject to Phosphothreonine. Residues 347 to 392 form a disordered region; that stretch reads LKKAKDDRASMQPAKAIHEQAESSRDLCRPPKKGELLGFGRKGNIR. Residues 362-381 are compositionally biased toward basic and acidic residues; sequence AIHEQAESSRDLCRPPKKGE. The residue at position 369 (serine 369) is a Phosphoserine.

As to quaternary structure, homodimer. Interacts with NDE1 and NDEL1. Does not interact with TUBG1. Interacts with DISC1. Interacts with PARP1. Interacts with MCRS1. Isoform 1 is expressed in brain. Isoform 2 is expressed in placenta and at low level in lung and liver. Isoform 3 is expressed in kidney and pancreas. Isoform 1 is expressed exclusively in brain.

It is found in the cytoplasm. The protein resides in the cytoskeleton. It localises to the microtubule organizing center. Its subcellular location is the centrosome. Its function is as follows. Involved in the regulation of neurogenesis. Negatively regulates neurite outgrowth. Involved in the morphogenesis of basket cells in the somatosensory cortex during embryogenesis. Involved in the positive regulation of oligodendrocyte differentiation during postnatal growth. Involved in dendritic arborization, morphogenesis of spine density dendrite, and establishment of postsynaptic dendrite density in cortical pyramidal neurons. Involved in homologous recombination (HR) repair pathway. Required for proper resolution of DNA double-strand breaks (DSBs) by HR. Is required for recovery of stalled replication forks, and directly contributes to genomic stability. Interacts with PARP1 and mediates MRE11-dependent DNA end resection during replication fork recovery. Contributes to genomic stability by preventing telomere dysfunction. The protein is Protein ZNF365 (ZNF365) of Homo sapiens (Human).